A 348-amino-acid polypeptide reads, in one-letter code: Hereditary hemochromatosis protein homolog (348 aa).

An N-terminal signal peptide occupies residues 1–22 (MGPRARPALFFLILLRTVAAQG). Residues 23-114 (RPPRSHSLRY…IMDNHNHSKE (92 aa)) form an alpha-1 region. The Extracellular segment spans residues 23–306 (RPPRSHSLRY…WEPSLSNTLV (284 aa)). Asn-110, Asn-130, and Asn-234 each carry an N-linked (GlcNAc...) asparagine glycan. The alpha-2 stretch occupies residues 115 to 205 (SHTLQVILGC…ELGRGVLDQQ (91 aa)). 2 disulfides stabilise this stretch: Cys-124–Cys-187 and Cys-225–Cys-282. An alpha-3 region spans residues 206–297 (VPPLVKVTHH…GLDQPLTATW (92 aa)). The Ig-like C1-type domain occupies 207–296 (PPLVKVTHHV…PGLDQPLTAT (90 aa)). The segment at 298-306 (EPSLSNTLV) is connecting peptide. The helical transmembrane segment at 307–330 (TGVISGIAVCVIIFLIGILFRILR) threads the bilayer. Residues 331 to 348 (KRQASRGAMGDYVLAECE) are Cytoplasmic-facing.

It belongs to the MHC class I family. In terms of assembly, binds TFR through the extracellular domain in a pH-dependent manner.

The protein resides in the cell membrane. Binds to transferrin receptor (TFR) and reduces its affinity for iron-loaded transferrin. This Dicerorhinus sumatrensis (Sumatran rhinoceros) protein is Hereditary hemochromatosis protein homolog (HFE).